Consider the following 105-residue polypeptide: Nitrogenase-stabilizing/protective protein NifW 1 (105 aa).

This sequence belongs to the NifW family. In terms of assembly, homotrimer; associates with NifD.

May protect the nitrogenase Fe-Mo protein from oxidative damage. This Trichormus variabilis (strain ATCC 29413 / PCC 7937) (Anabaena variabilis) protein is Nitrogenase-stabilizing/protective protein NifW 1.